The following is a 95-amino-acid chain: Protein TusB (95 aa).

This sequence belongs to the DsrH/TusB family. In terms of assembly, heterohexamer, formed by a dimer of trimers. The hexameric TusBCD complex contains 2 copies each of TusB, TusC and TusD. The TusBCD complex interacts with TusE.

The protein resides in the cytoplasm. Functionally, part of a sulfur-relay system required for 2-thiolation of 5-methylaminomethyl-2-thiouridine (mnm(5)s(2)U) at tRNA wobble positions. The protein is Protein TusB of Shigella flexneri.